The following is a 588-amino-acid chain: Lysophospholipase 2 (588 aa).

The interval 15-38 (NRALPNAPDGYTPQGETCPSKRPS) is disordered. The PLA2c domain occupies 31–574 (TCPSKRPSIR…KTYCWNGTIN (544 aa)). Asn-41, Asn-58, Asn-77, Asn-84, Asn-88, Asn-119, Asn-123, Asn-157, Asn-167, Asn-228, Asn-272, Asn-302, Asn-340, Asn-431, Asn-449, Asn-478, Asn-481, Asn-501, Asn-510, Asn-529, Asn-553, Asn-570, and Asn-574 each carry an N-linked (GlcNAc...) asparagine glycan.

Belongs to the lysophospholipase family.

It carries out the reaction a 1-acyl-sn-glycero-3-phosphocholine + H2O = sn-glycerol 3-phosphocholine + a fatty acid + H(+). In terms of biological role, catalyzes the release of fatty acids from lysophospholipids. This Aspergillus fumigatus (strain ATCC MYA-4609 / CBS 101355 / FGSC A1100 / Af293) (Neosartorya fumigata) protein is Lysophospholipase 2 (plb2).